Consider the following 249-residue polypeptide: Tumor necrosis factor ligand superfamily member 12 (249 aa).

The Cytoplasmic segment spans residues 1–21 (MAARRSQRRRGRRGEPGTALL). A helical; Signal-anchor for type II membrane protein transmembrane segment spans residues 22-45 (APLVLSLGLALACLGLLLVVVSLG). Topologically, residues 46-249 (SWATLSAQEP…LTYFGLFQVH (204 aa)) are extracellular. Positions 52–78 (AQEPSQEELTAEDRREPPELNPQTEES) are disordered. The region spanning 107-248 (IAAHYEVHPR…FLTYFGLFQV (142 aa)) is the THD domain. N-linked (GlcNAc...) asparagine glycosylation occurs at asparagine 139. Cysteine 191 and cysteine 210 are joined by a disulfide.

The protein belongs to the tumor necrosis factor family. Homotrimer. Interacts with the angiogenic factor AGGF1/VG5Q. Post-translationally, the soluble form is produced from the membrane form by proteolytic processing. In terms of tissue distribution, widely expressed.

Its subcellular location is the cell membrane. It localises to the secreted. In terms of biological role, binds to FN14 and possibly also to TNRFSF12/APO3. Weak inducer of apoptosis in some cell types. Mediates NF-kappa-B activation. Promotes angiogenesis and the proliferation of endothelial cells. Also involved in induction of inflammatory cytokines. Promotes IL8 secretion. The sequence is that of Tumor necrosis factor ligand superfamily member 12 (Tnfsf12) from Mus musculus (Mouse).